The following is an 845-amino-acid chain: Protein SPA1-RELATED 3 (845 aa).

Polar residues predominate over residues 1–19; the sequence is MEGSSNSNSRGFNTSGVSD. Disordered regions lie at residues 1 to 33 and 139 to 158; these read MEGS…LTTR and CSDS…KEIG. Positions 1-297 constitute a Protein kinase domain; that stretch reads MEGSSNSNSR…MSDLLQSEFI (297 aa). The stretch at 301-329 forms a coiled coil; sequence RDNLEEREAAIELRDRIEEQESLLEFLLL. WD repeat units lie at residues 532 to 571, 581 to 621, 624 to 664, 666 to 706, 710 to 748, 757 to 796, and 812 to 845; these read NSSN…NDNR, AGRS…LVTE, EHKK…SIGT, KTKA…IPLC, GHSK…SGIN, GHTN…PVMS, and DASQ…EMMT. Residues 685–699 carry the DWD box motif; the sequence is AFGSADHKVYYYDLR.

In terms of assembly, interacts with COP1 and CO.

The protein resides in the nucleus. Repressor of photomorphogenesis in the light. Probably part of the COP1/SPA E3 ubiquitin-protein ligase complex. The chain is Protein SPA1-RELATED 3 (SPA3) from Arabidopsis thaliana (Mouse-ear cress).